The following is a 429-amino-acid chain: Adenylosuccinate synthetase (429 aa).

GTP is bound by residues 12-18 and 40-42; these read GDEGKGK and GHT. Asp-13 acts as the Proton acceptor in catalysis. Asp-13 and Gly-40 together coordinate Mg(2+). Residues 13-16, 38-41, Thr-128, Arg-142, Gln-223, Thr-238, and Arg-302 each bind IMP; these read DEGK and NAGH. His-41 acts as the Proton donor in catalysis. 298 to 304 is a binding site for substrate; sequence ATTGRKR. GTP-binding positions include Arg-304, 330–332, and 412–414; these read KLD and GTG.

This sequence belongs to the adenylosuccinate synthetase family. As to quaternary structure, homodimer. It depends on Mg(2+) as a cofactor.

The protein resides in the cytoplasm. It carries out the reaction IMP + L-aspartate + GTP = N(6)-(1,2-dicarboxyethyl)-AMP + GDP + phosphate + 2 H(+). Its pathway is purine metabolism; AMP biosynthesis via de novo pathway; AMP from IMP: step 1/2. In terms of biological role, plays an important role in the de novo pathway of purine nucleotide biosynthesis. Catalyzes the first committed step in the biosynthesis of AMP from IMP. The sequence is that of Adenylosuccinate synthetase from Tropheryma whipplei (strain TW08/27) (Whipple's bacillus).